A 310-amino-acid polypeptide reads, in one-letter code: Probable GTP 3',8-cyclase (310 aa).

The Radical SAM core domain occupies 5 to 218 (KYGRSLQKLR…VNIIFELGGR (214 aa)). Arg-14 serves as a coordination point for GTP. Residues Cys-21, Cys-25, and Cys-28 each contribute to the [4Fe-4S] cluster site. Lys-62 is a GTP binding site. Position 66 (Gly-66) interacts with S-adenosyl-L-methionine. Thr-91 is a GTP binding site. Ser-115 lines the S-adenosyl-L-methionine pocket. Lys-153 lines the GTP pocket. Residues Cys-251, Cys-254, and Cys-268 each coordinate [4Fe-4S] cluster.

This sequence belongs to the radical SAM superfamily. MoaA family. [4Fe-4S] cluster is required as a cofactor.

It carries out the reaction GTP + AH2 + S-adenosyl-L-methionine = (8S)-3',8-cyclo-7,8-dihydroguanosine 5'-triphosphate + 5'-deoxyadenosine + L-methionine + A + H(+). Its pathway is cofactor biosynthesis; molybdopterin biosynthesis. Catalyzes the cyclization of GTP to (8S)-3',8-cyclo-7,8-dihydroguanosine 5'-triphosphate. This is Probable GTP 3',8-cyclase from Pyrobaculum aerophilum (strain ATCC 51768 / DSM 7523 / JCM 9630 / CIP 104966 / NBRC 100827 / IM2).